The chain runs to 224 residues: MSLKQLPTESMPREKLLQRGPQSLSDAELLAIFLRTGTQGMNVLALADLLLRDFGSLRALFCASKEQFCRHKGLGEAKFVQLQAVLEMTQRYLAETLKRGDALTSPQQTKLYLSSVLRDRQREAFYILFLDNQHRVIRDEILFEGTIDAASVYPREVVKRALHHNAAAVILAHNHPSGVAEPSQADRRITDRLRDALGLVEIRVLDHFVVGDGEVVSFAERGWI.

The disordered stretch occupies residues 1-20; the sequence is MSLKQLPTESMPREKLLQRG. The region spanning 102-224 is the MPN domain; sequence ALTSPQQTKL…VVSFAERGWI (123 aa). Zn(2+) contacts are provided by His173, His175, and Asp186. Positions 173–186 match the JAMM motif motif; it reads HNHPSGVAEPSQAD.

It belongs to the UPF0758 family.

The sequence is that of UPF0758 protein VCM66_0205 from Vibrio cholerae serotype O1 (strain M66-2).